We begin with the raw amino-acid sequence, 456 residues long: MRNSWIQPRIGQKNITQMNFAKNGHITEEMNYVAKKENLPPSLIMEEVARGRLIIPANVNHVNLEPMAIGIASKCKVNANIGASPNASDINEEVEKLKLAVKYGADTVMDLSTGGVNLDEVRQAIIKESSVPIGTVPVYQALESAHGSIERLTEDDFLHIIEKHCQQGVDYQTIHAGLLIEHLPKVKGRITGIVSRGGGILAQWMLHHFKQNPLYTRFDDICEIFKKYDCTFSLGDSLRPGCLHDASDDAQLAELKTLGELTRRAWTHNVQVMVEGPGHVPMDQIEFNVRKQMEECSEAPFYVLGPLVTDISPGYDHISSAIGAAMAGWYGTAMLCYVTPKEHLGLPNAEDVREGLIAYKIAAHAADIARHRAGARDRDDELSHARYNFDWNKQFELSLDPERAKQYHDETLPEEIFKKAEFCSMCGPNHCPMNSKISDETLDELNNKLTKCDTSV.

Substrate-binding positions include asparagine 80, methionine 109, tyrosine 139, histidine 175, 195-197 (SRG), 236-239 (DSLR), and glutamate 275. Residue histidine 279 coordinates Zn(2+). Position 302 (tyrosine 302) interacts with substrate. Position 343 (histidine 343) interacts with Zn(2+). The [4Fe-4S] cluster site is built by cysteine 423, cysteine 426, and cysteine 431.

This sequence belongs to the ThiC family. The cofactor is [4Fe-4S] cluster.

The catalysed reaction is 5-amino-1-(5-phospho-beta-D-ribosyl)imidazole + S-adenosyl-L-methionine = 4-amino-2-methyl-5-(phosphooxymethyl)pyrimidine + CO + 5'-deoxyadenosine + formate + L-methionine + 3 H(+). It participates in cofactor biosynthesis; thiamine diphosphate biosynthesis. Functionally, catalyzes the synthesis of the hydroxymethylpyrimidine phosphate (HMP-P) moiety of thiamine from aminoimidazole ribotide (AIR) in a radical S-adenosyl-L-methionine (SAM)-dependent reaction. In Prochlorococcus marinus subsp. pastoris (strain CCMP1986 / NIES-2087 / MED4), this protein is Phosphomethylpyrimidine synthase.